A 592-amino-acid chain; its full sequence is Aspartate--tRNA ligase (592 aa).

Glu-173 contributes to the L-aspartate binding site. An aspartate region spans residues 197 to 200; sequence QLFK. Arg-219 is an L-aspartate binding site. ATP contacts are provided by residues 219–221 and Gln-228; that span reads RDE. His-448 contributes to the L-aspartate binding site. An ATP-binding site is contributed by Glu-482. Arg-489 lines the L-aspartate pocket. 534–537 serves as a coordination point for ATP; the sequence is GLDR.

Belongs to the class-II aminoacyl-tRNA synthetase family. Type 1 subfamily. Homodimer.

The protein localises to the cytoplasm. It catalyses the reaction tRNA(Asp) + L-aspartate + ATP = L-aspartyl-tRNA(Asp) + AMP + diphosphate. Its function is as follows. Catalyzes the attachment of L-aspartate to tRNA(Asp) in a two-step reaction: L-aspartate is first activated by ATP to form Asp-AMP and then transferred to the acceptor end of tRNA(Asp). This is Aspartate--tRNA ligase from Shewanella baltica (strain OS155 / ATCC BAA-1091).